A 275-amino-acid polypeptide reads, in one-letter code: Large ribosomal subunit protein uL2 (275 aa).

The interval 221–275 is disordered; the sequence is VRGVAMNPVDHPMGGGEGKSSGGRHPCSPWGQQSKGVRTRNNKRTDQFIVKRRSK.

This sequence belongs to the universal ribosomal protein uL2 family. In terms of assembly, part of the 50S ribosomal subunit. Forms a bridge to the 30S subunit in the 70S ribosome.

Functionally, one of the primary rRNA binding proteins. Required for association of the 30S and 50S subunits to form the 70S ribosome, for tRNA binding and peptide bond formation. It has been suggested to have peptidyltransferase activity; this is somewhat controversial. Makes several contacts with the 16S rRNA in the 70S ribosome. This chain is Large ribosomal subunit protein uL2, found in Desulfosudis oleivorans (strain DSM 6200 / JCM 39069 / Hxd3) (Desulfococcus oleovorans).